A 352-amino-acid polypeptide reads, in one-letter code: Photosystem II D2 protein (352 aa).

Over M1–G31 the chain is Cytoplasmic. Residues W32 to T53 form a helical membrane-spanning segment. Residues F54–G108 lie on the Lumenal, thylakoid side of the membrane. Residues G109 to E131 traverse the membrane as a helical segment. H117 contacts chlorophyll a. Position 129 (Q129) interacts with pheophytin a. Residues I132 to P140 lie on the Cytoplasmic side of the membrane. A helical membrane pass occupies residues Y141–L162. N142 is a binding site for pheophytin a. Residues G163–N190 are Lumenal, thylakoid-facing. The helical transmembrane segment at W191 to T217 threads the bilayer. H197 is a binding site for chlorophyll a. Positions 214 and 261 each coordinate a plastoquinone. H214 contacts Fe cation. The Cytoplasmic segment spans residues V218–R265. Residues W266–G288 traverse the membrane as a helical segment. H268 serves as a coordination point for Fe cation. Topologically, residues L289–L352 are lumenal, thylakoid.

This sequence belongs to the reaction center PufL/M/PsbA/D family. As to quaternary structure, PSII is composed of 1 copy each of membrane proteins PsbA, PsbB, PsbC, PsbD, PsbE, PsbF, PsbH, PsbI, PsbJ, PsbK, PsbL, PsbM, PsbT, PsbX, PsbY, PsbZ, Psb30/Ycf12, peripheral proteins PsbO, CyanoQ (PsbQ), PsbU, PsbV and a large number of cofactors. It forms dimeric complexes. The cofactor is The D1/D2 heterodimer binds P680, chlorophylls that are the primary electron donor of PSII, and subsequent electron acceptors. It shares a non-heme iron and each subunit binds pheophytin, quinone, additional chlorophylls, carotenoids and lipids. There is also a Cl(-1) ion associated with D1 and D2, which is required for oxygen evolution. The PSII complex binds additional chlorophylls, carotenoids and specific lipids..

Its subcellular location is the cellular thylakoid membrane. The enzyme catalyses 2 a plastoquinone + 4 hnu + 2 H2O = 2 a plastoquinol + O2. Functionally, photosystem II (PSII) is a light-driven water:plastoquinone oxidoreductase that uses light energy to abstract electrons from H(2)O, generating O(2) and a proton gradient subsequently used for ATP formation. It consists of a core antenna complex that captures photons, and an electron transfer chain that converts photonic excitation into a charge separation. The D1/D2 (PsbA/PsbD) reaction center heterodimer binds P680, the primary electron donor of PSII as well as several subsequent electron acceptors. D2 is needed for assembly of a stable PSII complex. This Synechocystis sp. (strain ATCC 27184 / PCC 6803 / Kazusa) protein is Photosystem II D2 protein.